Here is an 86-residue protein sequence, read N- to C-terminus: U15-lycotoxin-Ls1a (86 aa).

A signal peptide spans 1 to 20; sequence MNSKIFAVLFLLAFLSCVLS. The 46-residue stretch at 21–66 folds into the WAP domain; that stretch reads DQYCPKSSITACKKMNIRNDCCKDDDCTGGSWCCATPCGNFCKYPT. 5 disulfide bridges follow: Cys-24/Cys-54, Cys-32/Cys-58, Cys-41/Cys-53, Cys-42/Cys-80, and Cys-47/Cys-62.

Belongs to the venom protein 11 family. 01 (wap-1) subfamily. Contains 5 disulfide bonds. As to expression, expressed by the venom gland.

Its subcellular location is the secreted. In terms of biological role, has antibacterial activity. This chain is U15-lycotoxin-Ls1a, found in Lycosa singoriensis (Wolf spider).